The primary structure comprises 903 residues: Translation initiation factor IF-2 (903 aa).

Residues 49–314 (LNREHGSGPD…GSSLQQGFNK (266 aa)) are disordered. A compositionally biased stretch (polar residues) spans 68–82 (STLNIQGTGGKSKSV). Basic and acidic residues-rich tracts occupy residues 93–163 (VKRD…EAAE) and 174–225 (EVSK…ENAT). Basic residues predominate over residues 265–279 (GRARPAKVARQKKSN). Residues 280–293 (KHSESKADREEARA) show a composition bias toward basic and acidic residues. Residues 402 to 571 (PRAPVVTIMG…LLQSEVLELK (170 aa)) form the tr-type G domain. The segment at 411–418 (GHVDHGKT) is G1. A GTP-binding site is contributed by 411–418 (GHVDHGKT). Residues 436 to 440 (GITQH) are G2. The tract at residues 457 to 460 (DTPG) is G3. GTP is bound by residues 457–461 (DTPGH) and 511–514 (NKID). Residues 511 to 514 (NKID) form a G4 region. Residues 547-549 (SAK) are G5.

The protein belongs to the TRAFAC class translation factor GTPase superfamily. Classic translation factor GTPase family. IF-2 subfamily.

The protein localises to the cytoplasm. One of the essential components for the initiation of protein synthesis. Protects formylmethionyl-tRNA from spontaneous hydrolysis and promotes its binding to the 30S ribosomal subunits. Also involved in the hydrolysis of GTP during the formation of the 70S ribosomal complex. The protein is Translation initiation factor IF-2 of Cronobacter sakazakii (strain ATCC BAA-894) (Enterobacter sakazakii).